We begin with the raw amino-acid sequence, 392 residues long: Phosphoglycerate kinase (392 aa).

Substrate-binding positions include 21–23, Arg-36, 59–62, Arg-113, and Arg-146; these read DFN and HLGR. Residues Lys-197, Glu-319, and 345–348 each bind ATP; that span reads GGDT.

It belongs to the phosphoglycerate kinase family. As to quaternary structure, monomer.

It is found in the cytoplasm. The enzyme catalyses (2R)-3-phosphoglycerate + ATP = (2R)-3-phospho-glyceroyl phosphate + ADP. It participates in carbohydrate degradation; glycolysis; pyruvate from D-glyceraldehyde 3-phosphate: step 2/5. This chain is Phosphoglycerate kinase, found in Francisella tularensis subsp. novicida (strain U112).